The primary structure comprises 38 residues: Photosystem II reaction center protein L (38 aa).

A helical membrane pass occupies residues 17-37 (SLYWGLLLIFVLAVSFSNYFF).

Belongs to the PsbL family. In terms of assembly, PSII is composed of 1 copy each of membrane proteins PsbA, PsbB, PsbC, PsbD, PsbE, PsbF, PsbH, PsbI, PsbJ, PsbK, PsbL, PsbM, PsbT, PsbX, PsbY, PsbZ, Psb30/Ycf12, at least 3 peripheral proteins of the oxygen-evolving complex and a large number of cofactors. It forms dimeric complexes.

It is found in the plastid. The protein localises to the chloroplast thylakoid membrane. One of the components of the core complex of photosystem II (PSII). PSII is a light-driven water:plastoquinone oxidoreductase that uses light energy to abstract electrons from H(2)O, generating O(2) and a proton gradient subsequently used for ATP formation. It consists of a core antenna complex that captures photons, and an electron transfer chain that converts photonic excitation into a charge separation. This subunit is found at the monomer-monomer interface and is required for correct PSII assembly and/or dimerization. The polypeptide is Photosystem II reaction center protein L (Amborella trichopoda).